The primary structure comprises 534 residues: SWI/SNF complex component SNF12 homolog (534 aa).

The span at 1-12 (MSGNNNNPQKPQ) shows a compositional bias: polar residues. Disordered regions lie at residues 1–33 (MSGNNNNPQKPQGSAPLPFGNPGMASASVPGNQ) and 78–132 (MTMN…SPMR). Positions 94–105 (PSSPSLTTPGSL) are enriched in low complexity. The region spanning 314 to 391 (YVPEKFKLST…SQKISHHLSP (78 aa)) is the SWIB/MDM2 domain.

The protein belongs to the SMARCD family. Part of a SWI-SNF complex.

It localises to the nucleus. In terms of biological role, involved in transcriptional activation and repression of select genes by chromatin remodeling (alteration of DNA-nucleosome topology). The sequence is that of SWI/SNF complex component SNF12 homolog from Arabidopsis thaliana (Mouse-ear cress).